The chain runs to 95 residues: Co-chaperonin GroES (95 aa).

Belongs to the GroES chaperonin family. As to quaternary structure, heptamer of 7 subunits arranged in a ring. Interacts with the chaperonin GroEL.

The protein resides in the cytoplasm. In terms of biological role, together with the chaperonin GroEL, plays an essential role in assisting protein folding. The GroEL-GroES system forms a nano-cage that allows encapsulation of the non-native substrate proteins and provides a physical environment optimized to promote and accelerate protein folding. GroES binds to the apical surface of the GroEL ring, thereby capping the opening of the GroEL channel. The protein is Co-chaperonin GroES of Clostridium acetobutylicum (strain ATCC 824 / DSM 792 / JCM 1419 / IAM 19013 / LMG 5710 / NBRC 13948 / NRRL B-527 / VKM B-1787 / 2291 / W).